The following is a 204-amino-acid chain: Casparian strip membrane protein 2 (204 aa).

The Cytoplasmic portion of the chain corresponds to 1-41 (MKNESTFIDVPADSSSAMKGKAPLIGVAKDHTASGSGGYNR). Residues 42-62 (GLSIFDFLLRLAAIVAASVAA) form a helical membrane-spanning segment. Residues 63-92 (GTMFTSDETLPFFTQFLQFEAGYDDLPTFQ) lie on the Extracellular side of the membrane. A helical membrane pass occupies residues 93 to 113 (FFVIAMSLVSGYIVLSLPISV). Residues 114–125 (VTIVRPLAAAPR) lie on the Cytoplasmic side of the membrane. A helical membrane pass occupies residues 126-146 (LLLLVLDTAVMGLTMAAASSA). The Extracellular segment spans residues 147 to 178 (AAISYVAHNGNQNTNWLPICQQFFDFCQKTSG). A helical membrane pass occupies residues 179–199 (AVVSSFVAVVFFMILVVLSGV). The Cytoplasmic segment spans residues 200–204 (ALERH).

The protein belongs to the Casparian strip membrane proteins (CASP) family. Homodimer and heterodimers.

The protein localises to the cell membrane. In terms of biological role, regulates membrane-cell wall junctions and localized cell wall deposition. Required for establishment of the Casparian strip membrane domain (CSD) and the subsequent formation of Casparian strips, a cell wall modification of the root endodermis that determines an apoplastic barrier between the intraorganismal apoplasm and the extraorganismal apoplasm and prevents lateral diffusion. This Raphanus sativus (Radish) protein is Casparian strip membrane protein 2.